Consider the following 192-residue polypeptide: dCTP deaminase, dUMP-forming (192 aa).

Residues Lys101–Arg106, Asp119, Thr127–Glu129, Gln148, Tyr162, and Gln174 each bind dCTP. Glu129 functions as the Proton donor/acceptor in the catalytic mechanism. Residues Tyr162 to Glu192 form a disordered region. Polar residues predominate over residues Tyr171 to Arg181. Positions Ser182 to Glu192 are enriched in basic residues.

It belongs to the dCTP deaminase family. Homotrimer.

It catalyses the reaction dCTP + 2 H2O = dUMP + NH4(+) + diphosphate. The protein operates within pyrimidine metabolism; dUMP biosynthesis; dUMP from dCTP: step 1/1. Functionally, bifunctional enzyme that catalyzes both the deamination of dCTP to dUTP and the hydrolysis of dUTP to dUMP without releasing the toxic dUTP intermediate. This is dCTP deaminase, dUMP-forming from Beutenbergia cavernae (strain ATCC BAA-8 / DSM 12333 / CCUG 43141 / JCM 11478 / NBRC 16432 / NCIMB 13614 / HKI 0122).